The chain runs to 65 residues: Large ribosomal subunit protein uL29 (65 aa).

The protein belongs to the universal ribosomal protein uL29 family.

This Coxiella burnetii (strain CbuK_Q154) (Coxiella burnetii (strain Q154)) protein is Large ribosomal subunit protein uL29.